The following is a 98-amino-acid chain: 10 kDa chaperonin (98 aa).

The protein belongs to the GroES chaperonin family. Forms stable complexes with CPN60 in the presence of ATP.

It is found in the cytoplasm. Functionally, seems to function only as a co-chaperone, along with cpn60, and in certain cases is essential for the discharge of biologically active proteins from cpn60. The chain is 10 kDa chaperonin from Brassica napus (Rape).